Here is a 407-residue protein sequence, read N- to C-terminus: Phosphoglycerate kinase (407 aa).

Substrate-binding positions include 27–29 (DLN), arginine 43, 66–69 (HLGR), arginine 125, and arginine 165. Residues lysine 215, glycine 303, glutamate 334, and 363–366 (GGDS) contribute to the ATP site.

This sequence belongs to the phosphoglycerate kinase family. As to quaternary structure, monomer.

Its subcellular location is the cytoplasm. It carries out the reaction (2R)-3-phosphoglycerate + ATP = (2R)-3-phospho-glyceroyl phosphate + ADP. It functions in the pathway carbohydrate degradation; glycolysis; pyruvate from D-glyceraldehyde 3-phosphate: step 2/5. This Mycobacterium sp. (strain JLS) protein is Phosphoglycerate kinase.